The following is a 276-amino-acid chain: MDADSLLLSLELASGSGQGLSPDRRASLLTSLMLVKRDYRYDRVLFWGRILGLVADYYIAQGLSEDQLAPRKTLYSLNCTEWSLLPPATEEMVAQSSVVKGRFMGDPSYEYEHTELQKVNEGEKVFEEEIVVQIKEETRLVSVIDQIDKAVAIIPRGALFKTPFGPTHVNRTFEGLSLSEAKKLSSYFHFREPVELKNKTLLEKADLDPSLDFMDSLEHDIPKGSWSIQMERGNALVVLRSLLWPGLTFYHAPRTKNYGYVYVGTGEKNMDLPFML.

The protein belongs to the flagellar radial spoke RSP9 family. As to quaternary structure, component of the axonemal radial spoke 1 (RS1) and 2 (RS2) complexes, at least composed of spoke head proteins RSPH1, RSPH3, RSPH9 and the cilia-specific component RSPH4A or sperm-specific component RSPH6A, spoke stalk proteins RSPH14, DNAJB13, DYDC1, ROPN1L and NME5, and the RS1 complex-specific anchor protein IQUB. Interacts with IQUB. Interacts with RSPH3B. Interacts with RSPH4A. Interacts with RSPH6A. Interacts with CFAP61. Interacts with LRRC23.

The protein resides in the cytoplasm. The protein localises to the cytoskeleton. It localises to the cilium axoneme. It is found in the flagellum axoneme. Its subcellular location is the cell projection. The protein resides in the kinocilium. Functionally, functions as part of axonemal radial spoke complexes that play an important part in the motility of sperm and cilia. Essential for both the radial spoke head assembly and the central pair microtubule stability in ependymal motile cilia. Required for motility of olfactory and neural cilia and for the structural integrity of ciliary axonemes in both 9+0 and 9+2 motile cilia. This Homo sapiens (Human) protein is Radial spoke head protein 9 homolog (RSPH9).